Reading from the N-terminus, the 89-residue chain is Small ribosomal subunit protein uS15 (89 aa).

This sequence belongs to the universal ribosomal protein uS15 family. As to quaternary structure, part of the 30S ribosomal subunit. Forms a bridge to the 50S subunit in the 70S ribosome, contacting the 23S rRNA.

Functionally, one of the primary rRNA binding proteins, it binds directly to 16S rRNA where it helps nucleate assembly of the platform of the 30S subunit by binding and bridging several RNA helices of the 16S rRNA. Its function is as follows. Forms an intersubunit bridge (bridge B4) with the 23S rRNA of the 50S subunit in the ribosome. The sequence is that of Small ribosomal subunit protein uS15 from Oleidesulfovibrio alaskensis (strain ATCC BAA-1058 / DSM 17464 / G20) (Desulfovibrio alaskensis).